The chain runs to 338 residues: Anthranilate phosphoribosyltransferase (338 aa).

5-phospho-alpha-D-ribose 1-diphosphate-binding positions include glycine 81, 84-85 (GD), threonine 89, 91-94 (NIST), 109-117 (KHGNRGVSS), and serine 121. Glycine 81 is an anthranilate binding site. Residue serine 93 participates in Mg(2+) binding. Asparagine 112 is a binding site for anthranilate. Arginine 167 lines the anthranilate pocket. Aspartate 225 and glutamate 226 together coordinate Mg(2+).

This sequence belongs to the anthranilate phosphoribosyltransferase family. In terms of assembly, homodimer. The cofactor is Mg(2+).

It carries out the reaction N-(5-phospho-beta-D-ribosyl)anthranilate + diphosphate = 5-phospho-alpha-D-ribose 1-diphosphate + anthranilate. It functions in the pathway amino-acid biosynthesis; L-tryptophan biosynthesis; L-tryptophan from chorismate: step 2/5. Its function is as follows. Catalyzes the transfer of the phosphoribosyl group of 5-phosphorylribose-1-pyrophosphate (PRPP) to anthranilate to yield N-(5'-phosphoribosyl)-anthranilate (PRA). The polypeptide is Anthranilate phosphoribosyltransferase (Methanoculleus marisnigri (strain ATCC 35101 / DSM 1498 / JR1)).